The chain runs to 509 residues: Maturase K (509 aa).

Belongs to the intron maturase 2 family. MatK subfamily.

The protein localises to the plastid. Its subcellular location is the chloroplast. In terms of biological role, usually encoded in the trnK tRNA gene intron. Probably assists in splicing its own and other chloroplast group II introns. This chain is Maturase K, found in Galbulimima belgraveana (Northern pigeonberry ash).